The sequence spans 288 residues: Ribosomal RNA small subunit methyltransferase A (288 aa).

Residues asparagine 28, leucine 30, glycine 55, glutamate 77, aspartate 103, and asparagine 123 each contribute to the S-adenosyl-L-methionine site.

Belongs to the class I-like SAM-binding methyltransferase superfamily. rRNA adenine N(6)-methyltransferase family. RsmA subfamily.

It localises to the cytoplasm. The catalysed reaction is adenosine(1518)/adenosine(1519) in 16S rRNA + 4 S-adenosyl-L-methionine = N(6)-dimethyladenosine(1518)/N(6)-dimethyladenosine(1519) in 16S rRNA + 4 S-adenosyl-L-homocysteine + 4 H(+). In terms of biological role, specifically dimethylates two adjacent adenosines (A1518 and A1519) in the loop of a conserved hairpin near the 3'-end of 16S rRNA in the 30S particle. May play a critical role in biogenesis of 30S subunits. The chain is Ribosomal RNA small subunit methyltransferase A from Xanthobacter autotrophicus (strain ATCC BAA-1158 / Py2).